The primary structure comprises 266 residues: Tryptophan synthase alpha chain (266 aa).

Active-site proton acceptor residues include Glu-50 and Asp-61.

The protein belongs to the TrpA family. Tetramer of two alpha and two beta chains.

The catalysed reaction is (1S,2R)-1-C-(indol-3-yl)glycerol 3-phosphate + L-serine = D-glyceraldehyde 3-phosphate + L-tryptophan + H2O. It functions in the pathway amino-acid biosynthesis; L-tryptophan biosynthesis; L-tryptophan from chorismate: step 5/5. In terms of biological role, the alpha subunit is responsible for the aldol cleavage of indoleglycerol phosphate to indole and glyceraldehyde 3-phosphate. This Alkaliphilus metalliredigens (strain QYMF) protein is Tryptophan synthase alpha chain.